A 132-amino-acid polypeptide reads, in one-letter code: Small ribosomal subunit protein uS8 (132 aa).

This sequence belongs to the universal ribosomal protein uS8 family. In terms of assembly, part of the 30S ribosomal subunit. Contacts proteins S5 and S12.

Its function is as follows. One of the primary rRNA binding proteins, it binds directly to 16S rRNA central domain where it helps coordinate assembly of the platform of the 30S subunit. The protein is Small ribosomal subunit protein uS8 of Halalkalibacterium halodurans (strain ATCC BAA-125 / DSM 18197 / FERM 7344 / JCM 9153 / C-125) (Bacillus halodurans).